The sequence spans 258 residues: Beta carbonic anhydrase 3 (258 aa).

An N-terminal signal peptide occupies residues M1–A28. Positions G24–S54 form a coiled coil. T35 is modified (phosphothreonine). At S95 the chain carries Phosphoserine. Residue C201 is modified to S-nitrosocysteine.

Belongs to the beta-class carbonic anhydrase family. In terms of tissue distribution, strongly expressed in aerial tissues including leaves, stems, flowers and siliques, and, to a lower extent, in roots.

The protein resides in the cytoplasm. The protein localises to the cytosol. The enzyme catalyses hydrogencarbonate + H(+) = CO2 + H2O. Its function is as follows. Reversible hydration of carbon dioxide. In Arabidopsis thaliana (Mouse-ear cress), this protein is Beta carbonic anhydrase 3 (BCA3).